The primary structure comprises 85 residues: Large ribosomal subunit protein bL27 (85 aa).

The disordered stretch occupies residues 1–20 (MATKKAGGSTKNGRDSNPKM).

Belongs to the bacterial ribosomal protein bL27 family.

This Acinetobacter baumannii (strain AB307-0294) protein is Large ribosomal subunit protein bL27.